Reading from the N-terminus, the 212-residue chain is Cytidylate kinase (212 aa).

7-15 (GPAASGKGT) contributes to the ATP binding site.

It belongs to the cytidylate kinase family. Type 1 subfamily.

Its subcellular location is the cytoplasm. The catalysed reaction is CMP + ATP = CDP + ADP. The enzyme catalyses dCMP + ATP = dCDP + ADP. This chain is Cytidylate kinase, found in Rhodopseudomonas palustris (strain ATCC BAA-98 / CGA009).